The primary structure comprises 323 residues: Aspartate carbamoyltransferase catalytic subunit (323 aa).

Carbamoyl phosphate-binding residues include arginine 68 and threonine 69. Lysine 96 is a binding site for L-aspartate. Arginine 118, histidine 148, and glutamine 151 together coordinate carbamoyl phosphate. Residues arginine 181 and arginine 236 each coordinate L-aspartate. The carbamoyl phosphate site is built by glycine 277 and proline 278.

It belongs to the aspartate/ornithine carbamoyltransferase superfamily. ATCase family. As to quaternary structure, heterododecamer (2C3:3R2) of six catalytic PyrB chains organized as two trimers (C3), and six regulatory PyrI chains organized as three dimers (R2).

It carries out the reaction carbamoyl phosphate + L-aspartate = N-carbamoyl-L-aspartate + phosphate + H(+). The protein operates within pyrimidine metabolism; UMP biosynthesis via de novo pathway; (S)-dihydroorotate from bicarbonate: step 2/3. Its function is as follows. Catalyzes the condensation of carbamoyl phosphate and aspartate to form carbamoyl aspartate and inorganic phosphate, the committed step in the de novo pyrimidine nucleotide biosynthesis pathway. The sequence is that of Aspartate carbamoyltransferase catalytic subunit from Verminephrobacter eiseniae (strain EF01-2).